Consider the following 91-residue polypeptide: Small ribosomal subunit protein uS19 (91 aa).

It belongs to the universal ribosomal protein uS19 family.

Its function is as follows. Protein S19 forms a complex with S13 that binds strongly to the 16S ribosomal RNA. This is Small ribosomal subunit protein uS19 from Sphingopyxis alaskensis (strain DSM 13593 / LMG 18877 / RB2256) (Sphingomonas alaskensis).